A 123-amino-acid chain; its full sequence is Small ribosomal subunit protein uS12 (123 aa).

Residues 1 to 32 (MPTIQQLVRKGRKDKKAKVKTAALKGSPQRRG) are disordered. Basic residues predominate over residues 9–19 (RKGRKDKKAKV). Residue aspartate 89 is modified to 3-methylthioaspartic acid.

This sequence belongs to the universal ribosomal protein uS12 family. In terms of assembly, part of the 30S ribosomal subunit. Contacts proteins S8 and S17. May interact with IF1 in the 30S initiation complex.

With S4 and S5 plays an important role in translational accuracy. Functionally, interacts with and stabilizes bases of the 16S rRNA that are involved in tRNA selection in the A site and with the mRNA backbone. Located at the interface of the 30S and 50S subunits, it traverses the body of the 30S subunit contacting proteins on the other side and probably holding the rRNA structure together. The combined cluster of proteins S8, S12 and S17 appears to hold together the shoulder and platform of the 30S subunit. The chain is Small ribosomal subunit protein uS12 from Corynebacterium kroppenstedtii (strain DSM 44385 / JCM 11950 / CIP 105744 / CCUG 35717).